The sequence spans 394 residues: 1-deoxy-D-xylulose 5-phosphate reductoisomerase (394 aa).

Thr-6, Gly-7, Ser-8, Ile-9, Ala-32, and Asn-124 together coordinate NADPH. A 1-deoxy-D-xylulose 5-phosphate-binding site is contributed by Lys-125. Glu-126 contacts NADPH. Mn(2+) is bound at residue Asp-148. 1-deoxy-D-xylulose 5-phosphate is bound by residues Ser-149, Glu-150, Ser-174, and His-197. Mn(2+) is bound at residue Glu-150. NADPH is bound at residue Gly-203. The 1-deoxy-D-xylulose 5-phosphate site is built by Ser-210, Asn-215, Lys-216, and Glu-219. Glu-219 is a Mn(2+) binding site.

Belongs to the DXR family. Requires Mg(2+) as cofactor. The cofactor is Mn(2+).

The enzyme catalyses 2-C-methyl-D-erythritol 4-phosphate + NADP(+) = 1-deoxy-D-xylulose 5-phosphate + NADPH + H(+). It participates in isoprenoid biosynthesis; isopentenyl diphosphate biosynthesis via DXP pathway; isopentenyl diphosphate from 1-deoxy-D-xylulose 5-phosphate: step 1/6. Functionally, catalyzes the NADPH-dependent rearrangement and reduction of 1-deoxy-D-xylulose-5-phosphate (DXP) to 2-C-methyl-D-erythritol 4-phosphate (MEP). This chain is 1-deoxy-D-xylulose 5-phosphate reductoisomerase, found in Streptomyces avermitilis (strain ATCC 31267 / DSM 46492 / JCM 5070 / NBRC 14893 / NCIMB 12804 / NRRL 8165 / MA-4680).